The chain runs to 142 residues: Large ribosomal subunit protein uL13 (142 aa).

This sequence belongs to the universal ribosomal protein uL13 family. In terms of assembly, part of the 50S ribosomal subunit.

Functionally, this protein is one of the early assembly proteins of the 50S ribosomal subunit, although it is not seen to bind rRNA by itself. It is important during the early stages of 50S assembly. This chain is Large ribosomal subunit protein uL13, found in Vibrio cholerae serotype O1 (strain M66-2).